We begin with the raw amino-acid sequence, 338 residues long: 1-aminocyclopropane-1-carboxylate deaminase (338 aa).

Residue Lys51 is modified to N6-(pyridoxal phosphate)lysine. Ser78 (nucleophile) is an active-site residue.

It belongs to the ACC deaminase/D-cysteine desulfhydrase family. In terms of assembly, homotrimer. Requires pyridoxal 5'-phosphate as cofactor.

The catalysed reaction is 1-aminocyclopropane-1-carboxylate + H2O = 2-oxobutanoate + NH4(+). Catalyzes a cyclopropane ring-opening reaction, the irreversible conversion of 1-aminocyclopropane-1-carboxylate (ACC) to ammonia and alpha-ketobutyrate. Allows growth on ACC as a nitrogen source. The sequence is that of 1-aminocyclopropane-1-carboxylate deaminase from Burkholderia ambifaria (strain ATCC BAA-244 / DSM 16087 / CCUG 44356 / LMG 19182 / AMMD) (Burkholderia cepacia (strain AMMD)).